A 169-amino-acid polypeptide reads, in one-letter code: Lipoprotein signal peptidase (169 aa).

Transmembrane regions (helical) follow at residues Pro4–Leu24, Leu42–Ala62, Trp70–Ser90, and Ala102–Ile122. Catalysis depends on residues Asp123 and Asp141. Residues Phe137 to Ile157 traverse the membrane as a helical segment.

It belongs to the peptidase A8 family.

It is found in the cell inner membrane. The enzyme catalyses Release of signal peptides from bacterial membrane prolipoproteins. Hydrolyzes -Xaa-Yaa-Zaa-|-(S,diacylglyceryl)Cys-, in which Xaa is hydrophobic (preferably Leu), and Yaa (Ala or Ser) and Zaa (Gly or Ala) have small, neutral side chains.. It participates in protein modification; lipoprotein biosynthesis (signal peptide cleavage). Functionally, this protein specifically catalyzes the removal of signal peptides from prolipoproteins. The polypeptide is Lipoprotein signal peptidase (Yersinia enterocolitica serotype O:8 / biotype 1B (strain NCTC 13174 / 8081)).